The following is an 854-amino-acid chain: MFPFLAPIRSANHVEQQGTKYYVEITFLADSPYSRAPSSTGTEKSVIPTLRNLDDLETVSNKSRSSEGVNKLGSRPNSRSSAIVKKTSVSSLPTSARSEGKSSPIPVKDAIPAPARHKNKGLEMSSAMMELFGGGGSTSPAPSKRENPADAPSDRVVSNAKLSQPGPEWFEGFEQMDMTDIELPPDPNCPAEKVLRGEKSTPDFDSDWQEAKEDVLDPQSYPKSFNPAESLPGPDIGAGVDDEEEPEAEAQEMEEPQYESKVDEKDDDDNGSSSSKKGHPSEDGDSTRNGETPTDRRNSGAIEETADGESSAQSAAEKKNSGDDGNGGGGEMSILLVKNAQIVNDDAIFVADILIEDGIIQNVAPNLEAPEGAEVLDAAGKLALPAGIDVYTQVTDSSVDDLSTGCKSAIAGGTGTIVEVVRPRGAESVVSAVKRVKNQLEKSGISCHVALSVAITDFCEQEMSELVKNEGINSFVLDGVSLTDDKLLELFEHVKRLGALIRVVPENKSIVAMLEKKMLKLGVTGPEGFPQSRPESLEADRVSGVCVLGNLASCPISIVQVSSADSLAAIEKARASGALAHAEIASAAVTADGSALFSQDLRFASAHLTDVPLRRGAPDRMIGALSTQPLVVCTSGHRPVNSATRVAAKDFAIAQKGSTGAEERMAVVWERAVRSGRIDAMRFVAVTSTNAAKMFNMYPKKGRIAVGADADLVIWDASGKRVLESSRAQSSQENSMYDGLTVHSVVTATIVGGKIAYQNGEVREAPVAGGFLRLSPNSPYLFSMVGQRDKFANVERVEREASSQQQKPQQNGHHKNSGDFDRNRTKVMESSIDFGGSAANRPRNPPGGRTTGFW.

3 disordered regions span residues 57–114, 130–327, and 794–854; these read ETVS…IPAP, ELFG…DGNG, and VERV…TGFW. Composition is skewed to polar residues over residues 58–68 and 75–97; these read TVSNKSRSSEG and RPNS…TSAR. A compositionally biased stretch (basic and acidic residues) spans 193–202; sequence KVLRGEKSTP. The segment covering 240–257 has biased composition (acidic residues); the sequence is VDDEEEPEAEAQEMEEPQ. The segment covering 279–298 has biased composition (basic and acidic residues); it reads HPSEDGDSTRNGETPTDRRN. Polar residues predominate over residues 802 to 811; the sequence is SSQQQKPQQN. Residues 816–827 show a composition bias toward basic and acidic residues; that stretch reads NSGDFDRNRTKV.

The protein belongs to the metallo-dependent hydrolases superfamily. Hydantoinase/dihydropyrimidinase family. In terms of assembly, isoform a: Probable monomer. Isoform b: Probable homodimer. Isoform c: Probable homodimer. Probable heterodimer composed of isoform b and isoform c. Interacts with unc-14 and kinesin-1 motor complex light chain klc-1; both interactions regulate unc-33 neurite localization. Interacts with fln-1 (via calponin-homology (CH) domains and filamin repeat 18-19). Isoform c: Interacts with vab-8 isoform a. As to expression, expressed in ventral cord and nerve ring (at protein level). Isoform a: Expressed in nerve ring (at protein level). Expressed in the nervous system, two amphid socket cells and weakly in non-neuronal pharyngeal cells.

It is found in the cell projection. The protein localises to the axon. Its subcellular location is the dendrite. Its function is as follows. During neurogenesis, plays an essential role in axonal guidance and outgrowth by regulating the polarization of both microtubule and actin cytoskeletons. Establishes the asymmetry of axonal and dendrite microtubules and the polarized sorting of neuronal proteins. This is achieved in part by regulating the localization of kinesin-like protein unc-104. In neurons without a distal microtubule-organizing center (MTOC), also controls the organization of microtubules in dendrites. During the dorso-ventral axonal guidance and outgrowth of VD neurons, required downstream of Rac GTPases ced-10 and mig-2 to inhibit growth cone filopodial protrusion mediated by the unc-6/netrin receptor unc-40-unc-5. Specifically, regulates growth cone filopodial protrusion polarity, and thus migration, by promoting F-actin polarization and by restricting plus-end microtubule accumulation in the growth cone. Probably downstream of mab-20/Sema2a and mab-20 receptor plx-2, regulates the guidance of DD/VD neuron axons by modulating fln-1 interaction with F-actin which results in the remodeling of the actin cytoskeleton. In hermaphrodites, involved in sex myoblast (SM) migration by regulating the gonad-dependent repulsion of SMs. In terms of biological role, in neurons, required for the polarized sorting of axonal proteins. In PLM neuron, regulates innexin unc-9 gap junction turnover by suppressing unc-9 transport out of gap junctions. Plays a role in locomotion and egg-laying. In PLM neuron, regulates innexin unc-9 gap junction turnover by suppressing unc-9 transport out of gap junctions. The polypeptide is Protein unc-33 (Caenorhabditis elegans).